The following is a 400-amino-acid chain: Zinc finger CCHC domain-containing protein 3 (400 aa).

The tract at residues 1–157 (MATGGGAEEE…LQDEPPAAGP (157 aa)) is disordered. 2 stretches are compositionally biased toward basic and acidic residues: residues 26–38 (ARVE…REKM) and 47–63 (LAEK…RDET). Over residues 66–75 (GASGGLGSPG) the composition is skewed to gly residues. Residues 91 to 109 (GDPKGRRRDPTGEASDAYR) are compositionally biased toward basic and acidic residues. At Tyr198 the chain carries Phosphotyrosine. CCHC-type zinc fingers lie at residues 349-365 (RCFR…YCRK) and 369-384 (CNLC…QCPK).

Interacts with CGAS. Interacts with RIGI. Interacts with IFIH1/MDA5.

Its subcellular location is the cytoplasm. Its function is as follows. Nucleic acid-binding protein involved in innate immune response to DNA and RNA viruses. Binds DNA and RNA in the cytoplasm and acts by promoting recognition of viral nucleic acids by virus sensors, such as RIGI, IFIH1/MDA5 and CGAS. Acts as a co-sensor for recognition of double-stranded DNA (dsDNA) by cGAS in the cytoplasm, thereby playing a role in innate immune response to cytosolic dsDNA and DNA virus. Binds dsDNA and probably acts by promoting sensing of dsDNA by CGAS, leading to enhance CGAS oligomerization and activation. Promotes sensing of viral RNA by RIG-I-like receptors proteins RIGI and IFIH1/MDA5 via two mechanisms: binds double-stranded RNA (dsRNA), enhancing the binding of RIGI and IFIH1/MDA5 to dsRNA and promotes 'Lys-63'-linked ubiquitination and subsequent activation of RIGI and IFIH1/MDA5. The polypeptide is Zinc finger CCHC domain-containing protein 3 (Mus musculus (Mouse)).